We begin with the raw amino-acid sequence, 346 residues long: Protein FAF1 (346 aa).

Disordered regions lie at residues 22 to 120 (QFGS…LRSG) and 323 to 346 (KRDI…KSRR). A compositionally biased stretch (basic and acidic residues) spans 31-65 (FEDKTKNIRTEVDTRDSSGDEIDNSDHGSDFKDGT). The segment covering 72–85 (SDEDSGNETAEENN) has biased composition (acidic residues).

In terms of assembly, interacts with KRR1.

It localises to the nucleus. The protein localises to the nucleolus. Its function is as follows. Required for pre-rRNA processing and 40S ribosomal subunit assembly. Seems to act in the processing of 35S rRNA at the A(0), A(1), and A(2) cleavage sites. This Saccharomyces cerevisiae (strain ATCC 204508 / S288c) (Baker's yeast) protein is Protein FAF1 (FAF1).